The primary structure comprises 371 residues: Queuine tRNA-ribosyltransferase (371 aa).

Catalysis depends on Asp90, which acts as the Proton acceptor. Substrate-binding positions include 90–94 (DSGGF), Asp144, Gln189, and Gly215. An RNA binding region spans residues 246–252 (GVGTPEN). The active-site Nucleophile is Asp265. Residues 270-274 (TRNAR) form an RNA binding; important for wobble base 34 recognition region. Zn(2+)-binding residues include Cys303, Cys305, Cys308, and His334.

Belongs to the queuine tRNA-ribosyltransferase family. As to quaternary structure, homodimer. Within each dimer, one monomer is responsible for RNA recognition and catalysis, while the other monomer binds to the replacement base PreQ1. Zn(2+) serves as cofactor.

It catalyses the reaction 7-aminomethyl-7-carbaguanine + guanosine(34) in tRNA = 7-aminomethyl-7-carbaguanosine(34) in tRNA + guanine. It functions in the pathway tRNA modification; tRNA-queuosine biosynthesis. Functionally, catalyzes the base-exchange of a guanine (G) residue with the queuine precursor 7-aminomethyl-7-deazaguanine (PreQ1) at position 34 (anticodon wobble position) in tRNAs with GU(N) anticodons (tRNA-Asp, -Asn, -His and -Tyr). Catalysis occurs through a double-displacement mechanism. The nucleophile active site attacks the C1' of nucleotide 34 to detach the guanine base from the RNA, forming a covalent enzyme-RNA intermediate. The proton acceptor active site deprotonates the incoming PreQ1, allowing a nucleophilic attack on the C1' of the ribose to form the product. After dissociation, two additional enzymatic reactions on the tRNA convert PreQ1 to queuine (Q), resulting in the hypermodified nucleoside queuosine (7-(((4,5-cis-dihydroxy-2-cyclopenten-1-yl)amino)methyl)-7-deazaguanosine). In Helicobacter pylori (strain J99 / ATCC 700824) (Campylobacter pylori J99), this protein is Queuine tRNA-ribosyltransferase.